A 445-amino-acid chain; its full sequence is N-succinylarginine dihydrolase (445 aa).

Substrate is bound by residues 19–28 (AGLSYGNVAS), N110, and 137–138 (HR). E174 is an active-site residue. R214 serves as a coordination point for substrate. Residue H250 is part of the active site. Residues D252 and N363 each contribute to the substrate site. Residue C369 is the Nucleophile of the active site.

It belongs to the succinylarginine dihydrolase family. Homodimer.

The enzyme catalyses N(2)-succinyl-L-arginine + 2 H2O + 2 H(+) = N(2)-succinyl-L-ornithine + 2 NH4(+) + CO2. The protein operates within amino-acid degradation; L-arginine degradation via AST pathway; L-glutamate and succinate from L-arginine: step 2/5. In terms of biological role, catalyzes the hydrolysis of N(2)-succinylarginine into N(2)-succinylornithine, ammonia and CO(2). The sequence is that of N-succinylarginine dihydrolase from Aeromonas hydrophila subsp. hydrophila (strain ATCC 7966 / DSM 30187 / BCRC 13018 / CCUG 14551 / JCM 1027 / KCTC 2358 / NCIMB 9240 / NCTC 8049).